Here is a 449-residue protein sequence, read N- to C-terminus: Protein translocase subunit SecD (449 aa).

6 consecutive transmembrane segments (helical) span residues 6–26 (GLVFLAILAAMILAFTIVLPT), 272–292 (LAVKAGLVGIILVMIFMIAFY), 294–314 (LPGLLASIALVFYGVIVLALF), 317–337 (VPVTLTLAGIGGFIVSAGMAV), 379–399 (TFIACGILFWVGGTIAAGAPV), and 401–421 (GFAVTLFLGVAVSMFTAIFVT).

Belongs to the SecD/SecF family. SecD subfamily. Forms a complex with SecF. Part of the essential Sec protein translocation apparatus which comprises SecA, SecYEG and auxiliary proteins SecDF. Other proteins may also be involved.

It is found in the cell membrane. Functionally, part of the Sec protein translocase complex. Interacts with the SecYEG preprotein conducting channel. SecDF uses the proton motive force (PMF) to complete protein translocation after the ATP-dependent function of SecA. This Dehalococcoides mccartyi (strain VS) protein is Protein translocase subunit SecD.